Consider the following 889-residue polypeptide: Translation initiation factor IF-2 (889 aa).

The segment covering 115 to 236 (EAEAQAKAEA…EAERYSDHHI (122 aa)) has biased composition (basic and acidic residues). The disordered stretch occupies residues 115 to 293 (EAEAQAKAEA…RNRSTAPESM (179 aa)). Over residues 257 to 270 (GRRARNKNTAKTKR) the composition is skewed to basic residues. Residues 271–280 (GGKDARDGRE) show a composition bias toward basic and acidic residues. In terms of domain architecture, tr-type G spans 389 to 558 (PRAPVVTIMG…LLQAEVLELK (170 aa)). The tract at residues 398–405 (GHVDHGKT) is G1. 398 to 405 (GHVDHGKT) is a GTP binding site. The segment at 423–427 (GITQH) is G2. The G3 stretch occupies residues 444-447 (DTPG). GTP contacts are provided by residues 444 to 448 (DTPGH) and 498 to 501 (NKMD). Positions 498–501 (NKMD) are G4. The interval 534-536 (SAK) is G5.

This sequence belongs to the TRAFAC class translation factor GTPase superfamily. Classic translation factor GTPase family. IF-2 subfamily.

The protein resides in the cytoplasm. Functionally, one of the essential components for the initiation of protein synthesis. Protects formylmethionyl-tRNA from spontaneous hydrolysis and promotes its binding to the 30S ribosomal subunits. Also involved in the hydrolysis of GTP during the formation of the 70S ribosomal complex. This Shewanella sp. (strain ANA-3) protein is Translation initiation factor IF-2.